The following is a 252-amino-acid chain: uncharacterized protein (252 aa).

An ABC transporter domain is found at 13–247; the sequence is ITLENVNKWY…PKSERTRAFL (235 aa). Position 45 to 52 (45 to 52) interacts with ATP; that stretch reads GPSGSGKS.

The protein belongs to the ABC transporter superfamily.

It is found in the cell inner membrane. Its function is as follows. Probably part of a binding-protein-dependent transport system YdhWXYZ for an amino acid. Probably responsible for energy coupling to the transport system. This is an uncharacterized protein from Escherichia coli (strain K12).